The chain runs to 63 residues: Large ribosomal subunit protein bL28 (63 aa).

Belongs to the bacterial ribosomal protein bL28 family.

The protein is Large ribosomal subunit protein bL28 of Pelobacter propionicus (strain DSM 2379 / NBRC 103807 / OttBd1).